We begin with the raw amino-acid sequence, 333 residues long: DnaJ homolog subfamily C member 25 homolog (333 aa).

The chain crosses the membrane as a helical span at residues 8–28 (LVLLALLPTMALGLLEGLYCG). The J domain maps to 31–99 (NCYDVLGVTR…ESRTDYDYML (69 aa)). The helical transmembrane segment at 123-143 (VRVVIVVVLTIVSVIQYYSGW) threads the bilayer. Residues 158 to 208 (KYRNQALEIARDEIQEKIQKKGKNRMSKNDQRDELERIIRRVIEEKMDVKG) are a coiled coil. Residues 218–238 (VLWVQLIICPYTILSFIVWHA) form a helical membrane-spanning segment.

This sequence belongs to the DNAJC25 family.

The protein localises to the membrane. The chain is DnaJ homolog subfamily C member 25 homolog from Drosophila melanogaster (Fruit fly).